The following is a 305-amino-acid chain: Heme A synthase (305 aa).

The Cytoplasmic segment spans residues 1-6 (MKKFLK). A helical transmembrane segment spans residues 7-27 (VWSVLTIICMTVVVFGGALVT). Topologically, residues 28 to 63 (KTGSADGCGNSWPLCNGQLVRLTDVTPEKLIEFMHR) are extracellular. A disulfide bridge links Cys35 with Cys42. Glu59 is an active-site residue. Heme o is bound at residue His62. Residues 64–84 (MTTGISSIFVIVLAICAWIYM) form a helical membrane-spanning segment. At 85–92 (KNRRETKP) the chain is on the cytoplasmic side. Residues 93–113 (LAIIAVLFLIIQALMGMAAVV) form a helical membrane-spanning segment. The Extracellular segment spans residues 114 to 122 (WGQNPYIMA). A helical transmembrane segment spans residues 123 to 143 (LHFGISIICYASIVLLALMIF). His124 contacts heme o. Residues 144 to 160 (EVDRKFDARNLVMGTKL) are Cytoplasmic-facing. The chain crosses the membrane as a helical span at residues 161–181 (RVNIYALTIYTYLAVYTGALV). At 182 to 212 (RHEKASMAVPVWPFENGHFIMPTSVQDYVQY) the chain is on the extracellular side. The helical transmembrane segment at 213 to 233 (FHRLAAFILIVWLLYVTWLVF) threads the bilayer. His214 is a heme b binding site. Residues 234–240 (RDYRRYR) are Cytoplasmic-facing. The helical transmembrane segment at 241 to 261 (VLTFSMVLSLVFIALQAVTGA) threads the bilayer. Residues 262–271 (LSVYTGVNLY) lie on the Extracellular side of the membrane. The chain crosses the membrane as a helical span at residues 272–292 (IALAHSLIITMLFALLCYLCL). His276 lines the heme b pocket. Residues 293 to 305 (LASRSKSNRLRIK) are Cytoplasmic-facing.

It belongs to the COX15/CtaA family. Type 1 subfamily. In terms of assembly, interacts with CtaB. Heme b serves as cofactor.

Its subcellular location is the cell membrane. The enzyme catalyses Fe(II)-heme o + 2 A + H2O = Fe(II)-heme a + 2 AH2. The protein operates within porphyrin-containing compound metabolism; heme A biosynthesis; heme A from heme O: step 1/1. Catalyzes the conversion of heme O to heme A by two successive hydroxylations of the methyl group at C8. The first hydroxylation forms heme I, the second hydroxylation results in an unstable dihydroxymethyl group, which spontaneously dehydrates, resulting in the formyl group of heme A. This is Heme A synthase from Listeria monocytogenes serovar 1/2a (strain ATCC BAA-679 / EGD-e).